The chain runs to 376 residues: Putative glutamate--cysteine ligase 2-1 (376 aa).

The protein belongs to the glutamate--cysteine ligase type 2 family. YbdK subfamily.

The enzyme catalyses L-cysteine + L-glutamate + ATP = gamma-L-glutamyl-L-cysteine + ADP + phosphate + H(+). In terms of biological role, ATP-dependent carboxylate-amine ligase which exhibits weak glutamate--cysteine ligase activity. This Mycolicibacterium smegmatis (strain ATCC 700084 / mc(2)155) (Mycobacterium smegmatis) protein is Putative glutamate--cysteine ligase 2-1.